We begin with the raw amino-acid sequence, 142 residues long: Ribonuclease VapC31 (142 aa).

The PINc domain maps to 3–139; sequence LLDANVLLAA…ARFASVRHIR (137 aa). Positions 5 and 108 each coordinate Mg(2+).

Belongs to the PINc/VapC protein family. It depends on Mg(2+) as a cofactor.

Toxic component of a type II toxin-antitoxin (TA) system. An RNase. Its toxic effect is neutralized by coexpression with cognate antitoxin VapB31. The chain is Ribonuclease VapC31 from Mycobacterium tuberculosis (strain CDC 1551 / Oshkosh).